The sequence spans 76 residues: UPF0729 protein C18orf32 homolog (76 aa).

Positions 1–37 (MVCIPCIVIPVLLWVYKKFLEPYIYPLISPFVSRMWP) are necessary for its localzation to the endoplasmic reticulum and lipid droplets. Positions 47–56 (KNKGKVDYKG) are enriched in basic and acidic residues. The segment at 47–76 (KNKGKVDYKGADINGLPTRGPTEMCDKKKD) is disordered.

Belongs to the UPF0729 family. In terms of assembly, interacts with DERL1 and AMFR. In terms of processing, undergoes ER-associated degradation (ERAD).

Its subcellular location is the endoplasmic reticulum. The protein resides in the lipid droplet. In terms of biological role, may activate the NF-kappa-B signaling pathway. The chain is UPF0729 protein C18orf32 homolog from Bos taurus (Bovine).